Consider the following 514-residue polypeptide: tRNA-2-methylthio-N(6)-dimethylallyladenosine synthase (514 aa).

The segment at 1–21 (MNEEQRKASSVDVLAERDKKA) is disordered. An MTTase N-terminal domain is found at 68–186 (RTFLIKTYGC…LPEILEEAYL (119 aa)). The [4Fe-4S] cluster site is built by Cys77, Cys113, Cys147, Cys223, Cys227, and Cys230. The 232-residue stretch at 209–440 (REGNIKAWVN…KKVGHYSQIA (232 aa)) folds into the Radical SAM core domain. In terms of domain architecture, TRAM spans 442-505 (SKYEGQTVTV…QYSLNGSFVK (64 aa)).

This sequence belongs to the methylthiotransferase family. MiaB subfamily. In terms of assembly, monomer. The cofactor is [4Fe-4S] cluster.

It localises to the cytoplasm. The catalysed reaction is N(6)-dimethylallyladenosine(37) in tRNA + (sulfur carrier)-SH + AH2 + 2 S-adenosyl-L-methionine = 2-methylsulfanyl-N(6)-dimethylallyladenosine(37) in tRNA + (sulfur carrier)-H + 5'-deoxyadenosine + L-methionine + A + S-adenosyl-L-homocysteine + 2 H(+). Functionally, catalyzes the methylthiolation of N6-(dimethylallyl)adenosine (i(6)A), leading to the formation of 2-methylthio-N6-(dimethylallyl)adenosine (ms(2)i(6)A) at position 37 in tRNAs that read codons beginning with uridine. The protein is tRNA-2-methylthio-N(6)-dimethylallyladenosine synthase of Staphylococcus aureus (strain N315).